An 878-amino-acid polypeptide reads, in one-letter code: MARGLVSSLLLGQLLLVLVGLFSPAGAVPTPQYQTPNTQASSYWLSSIKRQGIAPFNGGGAGYKVFRNVKDFGAKGDGSSDDTAAINMAISSGSRCGKGCDSSTTTPALVYFPPGTYVVSKPIIQYYYTQIVGDALNMPVIKAAPSFEGIAVIDSDPYENDGSNWYTNQNNFFRGIRNLVIDLTGLDKSKGACIHWQVAQASSLQNIRFEMVKGGGDANKQIGIFMDNGSGGFMTDLVFNGGNYGAFFGNQQFTTRNLTFNNCNTAIFMNWNWAWTFKSLSVNDCGVALNMSNGGFNQTVGSVMILDSKIKNTPKGVVTSFNAESVPESGGTLILDNVDFTGSTDAVTSLQGSSIVGGGSVIKHWVQGNAWTAGSGSKAKRLPPQVQAKPDVARRDDCPAPAPQPPAQSTAPPYPIPETGEPTRVPTTEPSNVPTRVPTGGVPSGTTGTAPSTPSPSPTGGPTACPSAPVTKARVQTALPQPSKPAILLDKSGKVFERAKPQYENVSADKFLSVKSAGAKGDGKTDDTKAIQAVLDKATADQIVYFDHGAYLITSTIKVPKNIKITGEIWPMLMATGKAFSDMKNPIPMLQVGQPGDKGNVELSELIVTTQGSAPGCILVEWNVAEETQGSVGMWDVHFRVGGFAGTQLQSNTCAKTPNTTTTPDPKCFGAFMLLHITKTASAYLENTWLWVSDHELDLADHGQINIYNGRGALIESSGAVWMYGTASEHNTLYNYQIQNAKNVYMALIQTETPYYQSNPDALVPFAPDTKYNDPTFGDCTTAACKKAWGLRILNSTDVFLFGGGLYSFFENYKQECLKTESCQLNMIEVLCSETYLYGVSTKASTNMITSGGKGLVPQKENRSNFCSTIALFHQGNL.

The first 27 residues, 1-27, serve as a signal peptide directing secretion; sequence MARGLVSSLLLGQLLLVLVGLFSPAGA. N-linked (GlcNAc...) asparagine glycans are attached at residues asparagine 228, asparagine 257, asparagine 290, and asparagine 297. Positions 373 to 472 are disordered; sequence AGSGSKAKRL…TACPSAPVTK (100 aa). Over residues 400 to 416 the composition is skewed to pro residues; sequence APAPQPPAQSTAPPYPI. Residues 433–452 are compositionally biased toward low complexity; it reads VPTRVPTGGVPSGTTGTAPS. Asparagine 505, asparagine 659, asparagine 795, and asparagine 862 each carry an N-linked (GlcNAc...) asparagine glycan.

This sequence belongs to the glycosyl hydrolase 55 family.

It localises to the secreted. The catalysed reaction is Hydrolysis of (1-&gt;3)-beta-D-glucosidic linkages in (1-&gt;3)-beta-D-glucans.. In terms of biological role, probable glucan endo-1,3-beta-glucosidase involved in the hydrolysis of fungal cell wall. Classified as a small-oligosaccharide-producing type based its the end products: glucose, laminaribiose or laminaritetraose. This Arthroderma benhamiae (strain ATCC MYA-4681 / CBS 112371) (Trichophyton mentagrophytes) protein is Probable glucan endo-1,3-beta-glucosidase ARB_02077.